Here is a 127-residue protein sequence, read N- to C-terminus: Aspartate 1-decarboxylase (127 aa).

Ser25 acts as the Schiff-base intermediate with substrate; via pyruvic acid in catalysis. Ser25 carries the pyruvic acid (Ser) modification. Thr57 serves as a coordination point for substrate. Tyr58 acts as the Proton donor in catalysis. 73–75 contacts substrate; the sequence is GAA.

It belongs to the PanD family. In terms of assembly, heterooctamer of four alpha and four beta subunits. Pyruvate is required as a cofactor. Post-translationally, is synthesized initially as an inactive proenzyme, which is activated by self-cleavage at a specific serine bond to produce a beta-subunit with a hydroxyl group at its C-terminus and an alpha-subunit with a pyruvoyl group at its N-terminus.

It localises to the cytoplasm. It carries out the reaction L-aspartate + H(+) = beta-alanine + CO2. It functions in the pathway cofactor biosynthesis; (R)-pantothenate biosynthesis; beta-alanine from L-aspartate: step 1/1. Catalyzes the pyruvoyl-dependent decarboxylation of aspartate to produce beta-alanine. In Vesicomyosocius okutanii subsp. Calyptogena okutanii (strain HA), this protein is Aspartate 1-decarboxylase.